Here is a 217-residue protein sequence, read N- to C-terminus: MKFFLDTANVEEIKKYAELGLVDGVTTNPTLVAKEGRDFYEVVKEICEIVEGPVSAEVISTDAEGMVKEARELAKLADNIVIKIPMTKDGMKAVKILSAEGIKTNVTLVFSPLQALVAAKAGATYVSPFVGRLDDIGHVGMKLIEDVVKIYKNYDIKTEVIVASVRHPWHVLEAAKIGADIATMPPAVMDKLFNHPLTDIGLERFLKDWDEYLKSRK.

Lys-83 serves as the catalytic Schiff-base intermediate with substrate.

It belongs to the transaldolase family. Type 3B subfamily.

Its subcellular location is the cytoplasm. It carries out the reaction D-sedoheptulose 7-phosphate + D-glyceraldehyde 3-phosphate = D-erythrose 4-phosphate + beta-D-fructose 6-phosphate. Its pathway is carbohydrate degradation; pentose phosphate pathway; D-glyceraldehyde 3-phosphate and beta-D-fructose 6-phosphate from D-ribose 5-phosphate and D-xylulose 5-phosphate (non-oxidative stage): step 2/3. Functionally, transaldolase is important for the balance of metabolites in the pentose-phosphate pathway. The sequence is that of Probable transaldolase (tal) from Methanocaldococcus jannaschii (strain ATCC 43067 / DSM 2661 / JAL-1 / JCM 10045 / NBRC 100440) (Methanococcus jannaschii).